Reading from the N-terminus, the 636-residue chain is TNFAIP3-interacting protein 1 (636 aa).

Residues 20–73 are a coiled coil; sequence EASAAFERLVKENSRLKEKMQGIKMLGELLEESQMEATRLRQKAEELVKDNELL. Positions 61-71 are enriched in basic and acidic residues; that stretch reads QKAEELVKDNE. 2 disordered regions span residues 61–151 and 252–283; these read QKAE…GPLP and MSNGNKEGASGRPGSPKMEGTGKKAVAGQQQA. Phosphoserine is present on Ser77. The segment at 94–412 is interaction with Nef; the sequence is SNVTASPTAP…SPLTRQREYQ (319 aa). Over residues 131-142 the composition is skewed to polar residues; sequence EEQNSPESSSHA. Residues 196 to 258 adopt a coiled-coil conformation; the sequence is SKVHKNEQRT…KLLMSNGNKE (63 aa). Ser284 carries the phosphoserine modification. Residues 294–535 are a coiled coil; sequence VALGAAEKKV…RKAKASGERY (242 aa). Residues 351-367 are interaction with Shigella flexneri ipah9.8; sequence DLEAEREQKQRDFDRKL. Ser403 carries the post-translational modification Phosphoserine. The interval 431-588 is required for inhibitory activity of TNF-induced NF-kappa-B activation; sequence TPPSSPPTAF…MEHPPPLPNS (158 aa). Thr438 is subject to Phosphothreonine. Ser442 bears the Phosphoserine mark. The interval 452 to 510 is ubiquitin-binding domain (UBD); the sequence is KQELVTQNELLKQQVKIFEEDFQRERSDRERMNEEKEELKKQVEKLQAQVTLSNAQLKA. Positions 524–530 match the Nuclear localization signal motif; that stretch reads QKRKAKA. The residue at position 552 (Tyr552) is a Phosphotyrosine. Arg571 bears the Asymmetric dimethylarginine mark. Residue Arg599 is modified to Asymmetric dimethylarginine; alternate. The residue at position 599 (Arg599) is an Omega-N-methylarginine; alternate. The tract at residues 603-636 is disordered; the sequence is GGVRNPNQSSQVMDPPTARPTEPESPKNDREGPQ. Residues 623–636 are compositionally biased toward basic and acidic residues; sequence TEPESPKNDREGPQ. Ser627 is modified (phosphoserine).

In terms of assembly, interacts with TNFAIP3 and IKBKG (polyubiquitinated); facilitates TNFAIP3-mediated de-ubiquitination of NEMO/IKBKG. Interacts with polyubiquitin. Interacts with MAPK1, SELPLG and PIK3CD. Interacts with IRAK1 (polyubiquitinated). Interacts with MYD88; the interaction is indicative for participation in an activated TLR-signaling complex. Interacts with HIV-1 matrix protein. Interacts with TAX1BP1. As to quaternary structure, (Microbial infection) Interacts with Shigella flexneri ipah9.8; the interaction promotes polyubiquitination of IKBKG. In terms of processing, phosphorylation at Tyr-552 by SRC-family kinases recruits phosphoinositide-3-kinase (PI3K) PIK3CD:p85 heterodimer which results in integrin activation and leukocyte adhesion to activated endothelium during inflammation. Ubiquitous. Strongly expressed in peripheral blood lymphocytes, spleen and skeletal muscle, and is weakly expressed in the brain. In peripheral blood mononucleocytes, isoform 4 is mainly expressed and isoform 1 and isoform 7 are almost not expressed. Expression of isoform 1 and isoform 7 increases in leukemic cells.

The protein resides in the cytoplasm. The protein localises to the nucleus. Its function is as follows. Inhibits NF-kappa-B activation and TNF-induced NF-kappa-B-dependent gene expression by regulating TAX1BP1 and A20/TNFAIP3-mediated deubiquitination of IKBKG; proposed to link A20/TNFAIP3 to ubiquitinated IKBKG. Involved in regulation of EGF-induced ERK1/ERK2 signaling pathway; blocks MAPK3/MAPK1 nuclear translocation and MAPK1-dependent transcription. Increases cell surface CD4(T4) antigen expression. Involved in the anti-inflammatory response of macrophages and positively regulates TLR-induced activation of CEBPB. Involved in the prevention of autoimmunity; this function implicates binding to polyubiquitin. Involved in leukocyte integrin activation during inflammation; this function is mediated by association with SELPLG and dependent on phosphorylation by SRC-family kinases. Interacts with HIV-1 matrix protein and is packaged into virions and overexpression can inhibit viral replication. May regulate matrix nuclear localization, both nuclear import of PIC (Preintegration complex) and export of GAG polyprotein and viral genomic RNA during virion production. In case of infection, promotes association of IKBKG with Shigella flexneri E3 ubiquitin-protein ligase ipah9.8 p which in turn promotes polyubiquitination of IKBKG leading to its proteasome-dependent degradation and thus is perturbing NF-kappa-B activation during bacterial infection. This Homo sapiens (Human) protein is TNFAIP3-interacting protein 1 (TNIP1).